The following is a 481-amino-acid chain: MDPAVDKILAGKYPAKQHARRVAEALKAAGQDGSGVIYLEGTKTRMAEDSDEAVPFRQRRNFYYLSGCDLSDSYVTYNIDKDELVLYIPPADPDEVIWTGLPMSAEEALKVYDVDVVLPSTEVNAQLAHCCANKDSKPKRVYAIPDRVCPETTFLPFDDTNWDVLAQAIEQCRKVKDEYEIALLKRANEISAQAHLAVMKASKTAKNERELEAIFRSTCLYYDSRQQSYGPIMARGVNGATLHYQTNNMDIDDPVTGERPSLLIDAGGEYRMYASDITRAIPLSGKFSPEARQIYDIVLDMQMQCFGMIKAGVAWDDVHALAHKVAIKGLVNLGILRGSEEELFQKGVSVAFFPHGLGHYMGMDTHDVGGNPNFADPNPMFKYLRLRGTLSPNEVVTVEPGVYFCRFIIEPYLKSPELSKYIDSAVLDKYWKVGGVRIEDNLVVTQDGFQNLTTVPKDAEEVERIVQQGVPAFVLVSINDI.

Positions 265, 276, 399, and 439 each coordinate Mn(2+).

Belongs to the peptidase M24B family. The cofactor is Mn(2+).

It catalyses the reaction Release of any N-terminal amino acid, including proline, that is linked to proline, even from a dipeptide or tripeptide.. Catalyzes the removal of a penultimate prolyl residue from the N-termini of peptides. This chain is Probable Xaa-Pro aminopeptidase PEPP (PEPP), found in Uncinocarpus reesii (strain UAMH 1704).